The primary structure comprises 537 residues: CTP synthase (537 aa).

Residues 1–268 (MPAKFIFVTG…DSIVVERLKL (268 aa)) form an amidoligase domain region. Position 14 (Ser14) interacts with CTP. Ser14 contributes to the UTP binding site. 15 to 20 (SLGKGI) serves as a coordination point for ATP. Residue Tyr55 coordinates L-glutamine. Position 72 (Asp72) interacts with ATP. Mg(2+)-binding residues include Asp72 and Glu142. CTP is bound by residues 149-151 (DIE), 189-194 (KTKPTQ), and Lys225. Residues 189 to 194 (KTKPTQ) and Lys225 each bind UTP. Positions 293-534 (EIALVGKYVT…IGAACRRAGG (242 aa)) constitute a Glutamine amidotransferase type-1 domain. Gly354 lines the L-glutamine pocket. The Nucleophile; for glutamine hydrolysis role is filled by Cys381. L-glutamine-binding positions include 382–385 (LGMQ), Glu405, and Arg462. Residues His507 and Glu509 contribute to the active site.

Belongs to the CTP synthase family. As to quaternary structure, homotetramer.

It catalyses the reaction UTP + L-glutamine + ATP + H2O = CTP + L-glutamate + ADP + phosphate + 2 H(+). The catalysed reaction is L-glutamine + H2O = L-glutamate + NH4(+). It carries out the reaction UTP + NH4(+) + ATP = CTP + ADP + phosphate + 2 H(+). Its pathway is pyrimidine metabolism; CTP biosynthesis via de novo pathway; CTP from UDP: step 2/2. With respect to regulation, allosterically activated by GTP, when glutamine is the substrate; GTP has no effect on the reaction when ammonia is the substrate. The allosteric effector GTP functions by stabilizing the protein conformation that binds the tetrahedral intermediate(s) formed during glutamine hydrolysis. Inhibited by the product CTP, via allosteric rather than competitive inhibition. Catalyzes the ATP-dependent amination of UTP to CTP with either L-glutamine or ammonia as the source of nitrogen. Regulates intracellular CTP levels through interactions with the four ribonucleotide triphosphates. In Moorella thermoacetica (strain ATCC 39073 / JCM 9320), this protein is CTP synthase.